The sequence spans 167 residues: Protein FimG (167 aa).

Positions 1-23 (MKWCKRGYVLAAILALASATIQA) are cleaved as a signal peptide. The cysteines at positions 39 and 77 are disulfide-linked.

The protein belongs to the fimbrial protein family.

The protein resides in the fimbrium. Its function is as follows. Involved in regulation of length and mediation of adhesion of type 1 fimbriae (but not necessary for the production of fimbriae). Involved in the integration of FimH in the fimbriae. The protein is Protein FimG (fimG) of Escherichia coli (strain K12).